Consider the following 207-residue polypeptide: Pyridoxine/pyridoxamine 5'-phosphate oxidase (207 aa).

FMN is bound by residues 53 to 58 (RMVLLK), 68 to 69 (YT), lysine 75, and glutamine 97. Lysine 58 lines the substrate pocket. Residues tyrosine 115, arginine 119, and serine 123 each coordinate substrate. FMN contacts are provided by residues 132–133 (QS) and tryptophan 177. 183–185 (RLH) provides a ligand contact to substrate. Arginine 187 contacts FMN.

The protein belongs to the pyridoxamine 5'-phosphate oxidase family. In terms of assembly, homodimer. It depends on FMN as a cofactor.

It carries out the reaction pyridoxamine 5'-phosphate + O2 + H2O = pyridoxal 5'-phosphate + H2O2 + NH4(+). It catalyses the reaction pyridoxine 5'-phosphate + O2 = pyridoxal 5'-phosphate + H2O2. Its pathway is cofactor metabolism; pyridoxal 5'-phosphate salvage; pyridoxal 5'-phosphate from pyridoxamine 5'-phosphate: step 1/1. It participates in cofactor metabolism; pyridoxal 5'-phosphate salvage; pyridoxal 5'-phosphate from pyridoxine 5'-phosphate: step 1/1. Its function is as follows. Catalyzes the oxidation of either pyridoxine 5'-phosphate (PNP) or pyridoxamine 5'-phosphate (PMP) into pyridoxal 5'-phosphate (PLP). The chain is Pyridoxine/pyridoxamine 5'-phosphate oxidase from Bartonella quintana (strain Toulouse) (Rochalimaea quintana).